The sequence spans 213 residues: Imidazole glycerol phosphate synthase subunit HisH 1 (213 aa).

Residues 3 to 213 (SVSILDYGVG…LSIIQQFLQI (211 aa)) form the Glutamine amidotransferase type-1 domain. C81 functions as the Nucleophile in the catalytic mechanism. Catalysis depends on residues H195 and E197.

Heterodimer of HisH and HisF.

It is found in the cytoplasm. It catalyses the reaction 5-[(5-phospho-1-deoxy-D-ribulos-1-ylimino)methylamino]-1-(5-phospho-beta-D-ribosyl)imidazole-4-carboxamide + L-glutamine = D-erythro-1-(imidazol-4-yl)glycerol 3-phosphate + 5-amino-1-(5-phospho-beta-D-ribosyl)imidazole-4-carboxamide + L-glutamate + H(+). The enzyme catalyses L-glutamine + H2O = L-glutamate + NH4(+). The protein operates within amino-acid biosynthesis; L-histidine biosynthesis; L-histidine from 5-phospho-alpha-D-ribose 1-diphosphate: step 5/9. Its function is as follows. IGPS catalyzes the conversion of PRFAR and glutamine to IGP, AICAR and glutamate. The HisH subunit provides the glutamine amidotransferase activity that produces the ammonia necessary to HisF for the synthesis of IGP and AICAR. The protein is Imidazole glycerol phosphate synthase subunit HisH 1 of Legionella pneumophila (strain Lens).